The sequence spans 468 residues: 3-isopropylmalate dehydratase large subunit (468 aa).

[4Fe-4S] cluster contacts are provided by Cys347, Cys408, and Cys411.

This sequence belongs to the aconitase/IPM isomerase family. LeuC type 1 subfamily. As to quaternary structure, heterodimer of LeuC and LeuD. Requires [4Fe-4S] cluster as cofactor.

It carries out the reaction (2R,3S)-3-isopropylmalate = (2S)-2-isopropylmalate. Its pathway is amino-acid biosynthesis; L-leucine biosynthesis; L-leucine from 3-methyl-2-oxobutanoate: step 2/4. Functionally, catalyzes the isomerization between 2-isopropylmalate and 3-isopropylmalate, via the formation of 2-isopropylmaleate. In Methylobacillus flagellatus (strain ATCC 51484 / DSM 6875 / VKM B-1610 / KT), this protein is 3-isopropylmalate dehydratase large subunit.